Consider the following 503-residue polypeptide: Aspartyl/glutamyl-tRNA(Asn/Gln) amidotransferase subunit B (503 aa).

The protein belongs to the GatB/GatE family. GatB subfamily. In terms of assembly, heterotrimer of A, B and C subunits.

The enzyme catalyses L-glutamyl-tRNA(Gln) + L-glutamine + ATP + H2O = L-glutaminyl-tRNA(Gln) + L-glutamate + ADP + phosphate + H(+). It catalyses the reaction L-aspartyl-tRNA(Asn) + L-glutamine + ATP + H2O = L-asparaginyl-tRNA(Asn) + L-glutamate + ADP + phosphate + 2 H(+). Allows the formation of correctly charged Asn-tRNA(Asn) or Gln-tRNA(Gln) through the transamidation of misacylated Asp-tRNA(Asn) or Glu-tRNA(Gln) in organisms which lack either or both of asparaginyl-tRNA or glutaminyl-tRNA synthetases. The reaction takes place in the presence of glutamine and ATP through an activated phospho-Asp-tRNA(Asn) or phospho-Glu-tRNA(Gln). The chain is Aspartyl/glutamyl-tRNA(Asn/Gln) amidotransferase subunit B from Mycobacterium avium (strain 104).